The primary structure comprises 172 residues: Large ribosomal subunit protein uL10 (172 aa).

Belongs to the universal ribosomal protein uL10 family. Part of the ribosomal stalk of the 50S ribosomal subunit. The N-terminus interacts with L11 and the large rRNA to form the base of the stalk. The C-terminus forms an elongated spine to which L12 dimers bind in a sequential fashion forming a multimeric L10(L12)X complex.

Its function is as follows. Forms part of the ribosomal stalk, playing a central role in the interaction of the ribosome with GTP-bound translation factors. This is Large ribosomal subunit protein uL10 from Rhizobium etli (strain CIAT 652).